A 100-amino-acid chain; its full sequence is Aspartyl/glutamyl-tRNA(Asn/Gln) amidotransferase subunit C (100 aa).

The protein belongs to the GatC family. As to quaternary structure, heterotrimer of A, B and C subunits.

The enzyme catalyses L-glutamyl-tRNA(Gln) + L-glutamine + ATP + H2O = L-glutaminyl-tRNA(Gln) + L-glutamate + ADP + phosphate + H(+). It carries out the reaction L-aspartyl-tRNA(Asn) + L-glutamine + ATP + H2O = L-asparaginyl-tRNA(Asn) + L-glutamate + ADP + phosphate + 2 H(+). In terms of biological role, allows the formation of correctly charged Asn-tRNA(Asn) or Gln-tRNA(Gln) through the transamidation of misacylated Asp-tRNA(Asn) or Glu-tRNA(Gln) in organisms which lack either or both of asparaginyl-tRNA or glutaminyl-tRNA synthetases. The reaction takes place in the presence of glutamine and ATP through an activated phospho-Asp-tRNA(Asn) or phospho-Glu-tRNA(Gln). The chain is Aspartyl/glutamyl-tRNA(Asn/Gln) amidotransferase subunit C from Rickettsia felis (strain ATCC VR-1525 / URRWXCal2) (Rickettsia azadi).